A 422-amino-acid polypeptide reads, in one-letter code: Vitamin D3 receptor (422 aa).

The nuclear receptor DNA-binding region spans 21–96; that stretch reads PRICGVCGDR…IGMMKEFILT (76 aa). 8 residues coordinate Zn(2+): cysteine 24, cysteine 27, cysteine 41, cysteine 44, cysteine 60, cysteine 66, cysteine 76, and cysteine 79. NR C4-type zinc fingers lie at residues 24-44 and 60-84; these read CGVC…CEGC and CPFN…LKRC. Residues 97–126 form a hinge region; sequence DEEVQRKREMIMKRKEEEALKDSLRPKLSE. Residues 127-418 enclose the NR LBD domain; that stretch reads EQQHIIAILL…LTPLVLEVFG (292 aa). Tyrosine 143 provides a ligand contact to calcitriol. Residues 161–185 form a disordered region; the sequence is VSTGSYSPRPTLSFSGDSSSNSDLY. The segment covering 162–172 has biased composition (polar residues); that stretch reads STGSYSPRPTL. Low complexity predominate over residues 173 to 182; sequence SFSGDSSSNS. Residue serine 232 participates in calcitriol binding. The tract at residues 241–259 is interaction with coactivator LXXLL motif; it reads KMIPGFRDLTSDDQIVLLK. Calcitriol contacts are provided by arginine 269, serine 273, histidine 300, and histidine 392. The short motif at 411-419 is the 9aaTAD element; the sequence is PLVLEVFGN.

It belongs to the nuclear hormone receptor family. NR1 subfamily. Homodimer in the absence of bound vitamin D3. Heterodimer with RXRA after vitamin D3 binding. Interacts with MED1, NCOA1, NCOA2, NCOA3 and NCOA6 coactivators, leading to a strong increase of transcription of target genes. Interacts with the corepressor NCOR1. Interacts with SNW1. Interacts with IRX4, the interaction does not affect its transactivation activity. Interacts with CRY1. Interacts with CRY2 in a ligand-dependent manner. Ubiquitinated by UBR5, leading to its degradation: UBR5 specifically recognizes and binds ligand-bound VDR when it is not associated with coactivators (NCOAs). In presence of NCOAs, the UBR5-degron is not accessible, preventing its ubiquitination and degradation.

The protein resides in the nucleus. Its subcellular location is the cytoplasm. Nuclear receptor for calcitriol, the active form of vitamin D3 which mediates the action of this vitamin on cells. Enters the nucleus upon vitamin D3 binding where it forms heterodimers with the retinoid X receptor/RXR. The VDR-RXR heterodimers bind to specific response elements on DNA and activate the transcription of vitamin D3-responsive target genes. Plays a central role in calcium homeostasis. Also functions as a receptor for the secondary bile acid lithocholic acid (LCA) and its metabolites. This is Vitamin D3 receptor (Vdr) from Mus musculus (Mouse).